The following is a 455-amino-acid chain: tRNA modification GTPase MnmE (455 aa).

(6S)-5-formyl-5,6,7,8-tetrahydrofolate-binding residues include Arg24, Glu81, and Lys120. The region spanning 216–378 is the TrmE-type G domain; sequence GMTVVIAGRP…LREHLKACMG (163 aa). Asn226 is a binding site for K(+). GTP-binding positions include 226–231, 245–251, 270–273, 335–338, and 359–361; these read NAGKSS, TDIAGTT, DTAG, NKAD, and SAR. Mg(2+) is bound at residue Ser230. Positions 245, 247, and 250 each coordinate K(+). Thr251 contacts Mg(2+). Lys455 serves as a coordination point for (6S)-5-formyl-5,6,7,8-tetrahydrofolate.

This sequence belongs to the TRAFAC class TrmE-Era-EngA-EngB-Septin-like GTPase superfamily. TrmE GTPase family. In terms of assembly, homodimer. Heterotetramer of two MnmE and two MnmG subunits. K(+) serves as cofactor.

Its subcellular location is the cytoplasm. Exhibits a very high intrinsic GTPase hydrolysis rate. Involved in the addition of a carboxymethylaminomethyl (cmnm) group at the wobble position (U34) of certain tRNAs, forming tRNA-cmnm(5)s(2)U34. The protein is tRNA modification GTPase MnmE of Pseudomonas aeruginosa (strain ATCC 15692 / DSM 22644 / CIP 104116 / JCM 14847 / LMG 12228 / 1C / PRS 101 / PAO1).